A 194-amino-acid polypeptide reads, in one-letter code: Mitochondrial inner membrane protease ATP23 (194 aa).

A disordered region spans residues 1-20 (MEDAAAPNSGSEFNPGARRG). Position 96 (His-96) interacts with Zn(2+). Residue Glu-97 is part of the active site. His-100 is a binding site for Zn(2+).

The protein belongs to the peptidase M76 family.

The protein localises to the mitochondrion inner membrane. Has a dual role in the assembly of mitochondrial ATPase. Acts as a protease that removes the N-terminal 10 residues of mitochondrial ATPase CF(0) subunit 6 (ATP6) at the intermembrane space side. Also involved in the correct assembly of the membrane-embedded ATPase CF(0) particle, probably mediating association of ATP6 with the subunit 9 ring. The protein is Mitochondrial inner membrane protease ATP23 of Arabidopsis thaliana (Mouse-ear cress).